Reading from the N-terminus, the 131-residue chain is Small ribosomal subunit protein uS8 (131 aa).

Belongs to the universal ribosomal protein uS8 family. As to quaternary structure, part of the 30S ribosomal subunit. Contacts proteins S5 and S12.

In terms of biological role, one of the primary rRNA binding proteins, it binds directly to 16S rRNA central domain where it helps coordinate assembly of the platform of the 30S subunit. The sequence is that of Small ribosomal subunit protein uS8 from Acidithiobacillus ferrooxidans (strain ATCC 23270 / DSM 14882 / CIP 104768 / NCIMB 8455) (Ferrobacillus ferrooxidans (strain ATCC 23270)).